The primary structure comprises 384 residues: 8-amino-7-oxononanoate synthase (384 aa).

Arginine 21 is a binding site for substrate. 108–109 (GY) is a pyridoxal 5'-phosphate binding site. Histidine 133 provides a ligand contact to substrate. Residues serine 179, histidine 207, and threonine 233 each coordinate pyridoxal 5'-phosphate. N6-(pyridoxal phosphate)lysine is present on lysine 236. Residue threonine 350 participates in substrate binding.

It belongs to the class-II pyridoxal-phosphate-dependent aminotransferase family. BioF subfamily. Homodimer. Pyridoxal 5'-phosphate serves as cofactor.

The catalysed reaction is 6-carboxyhexanoyl-[ACP] + L-alanine + H(+) = (8S)-8-amino-7-oxononanoate + holo-[ACP] + CO2. Its pathway is cofactor biosynthesis; biotin biosynthesis. In terms of biological role, catalyzes the decarboxylative condensation of pimeloyl-[acyl-carrier protein] and L-alanine to produce 8-amino-7-oxononanoate (AON), [acyl-carrier protein], and carbon dioxide. The chain is 8-amino-7-oxononanoate synthase from Buchnera aphidicola subsp. Baizongia pistaciae (strain Bp).